Consider the following 342-residue polypeptide: Heat-inducible transcription repressor HrcA (342 aa).

It belongs to the HrcA family.

Negative regulator of class I heat shock genes (grpE-dnaK-dnaJ and groELS operons). Prevents heat-shock induction of these operons. This is Heat-inducible transcription repressor HrcA from Geobacter sulfurreducens (strain ATCC 51573 / DSM 12127 / PCA).